A 355-amino-acid polypeptide reads, in one-letter code: MKVYFENYSYYPALRTRSAEMTGLNNLSYENKKKILPLISLGKWPRSEEIQVSLDKSLEVMSNLPFILDVTKDNSHHCASSFELLSPENGFKNWIEFCSRNDNIIPVVQMPDSAKLRDISIQARVLEELKGSIAFRIRNLNTDINKTLTSLVSMNSPENAIVFIDLGYIRGNVSAITAAAINSINQIRTEIPEAIISVLATSFPSSVTNFCRENGQSGYIDVIERELHQNIGGSDVAIYGDHGSIHSVVYDNIIGRYVPRIDIALNDSWYFERRPGMNKEGFIEAAKSILAEYPHYQREDSWGAAMIRNAAIGDIAGMGSPAKWIAVRVNLHLNKQIELSEALQYGFDHDEEDLI.

In terms of biological role, the presence of this protein prevents gop protein from killing E.coli. The chain is Protein beta (Beta) from Escherichia coli (Bacteriophage P4).